Reading from the N-terminus, the 61-residue chain is MPKIIEAIYENGVFKPLQKVDLKEGERVRVVVSEVVAKTRGLLKGCEMEEIIEEIESEGFL.

The protein belongs to the UPF0165 family.

In terms of biological role, possibly the antitoxin component of a type II toxin-antitoxin (TA) system. Its cognate toxin is VapC13 (Potential). The protein is Putative antitoxin VapB13 (vapB13) of Archaeoglobus fulgidus (strain ATCC 49558 / DSM 4304 / JCM 9628 / NBRC 100126 / VC-16).